Here is a 71-residue protein sequence, read N- to C-terminus: Disintegrin halysin (71 aa).

Residues 1–71 (EAGEECDCGS…ISAGCPRNPF (71 aa)) enclose the Disintegrin domain. 6 cysteine pairs are disulfide-bonded: C6–C21, C8–C16, C15–C38, C29–C35, C34–C59, and C47–C66. Residues 51-53 (RGD) carry the Cell attachment site motif.

The protein belongs to the venom metalloproteinase (M12B) family. P-II subfamily. P-IIa sub-subfamily. As to quaternary structure, monomer. As to expression, expressed by the venom gland.

The protein localises to the secreted. Its function is as follows. Inhibits fibrinogen interaction with platelets. Acts by binding to alpha-IIb/beta-3 (ITGA2B/ITGB3) on the platelet surface and inhibits aggregation induced by ADP, thrombin, platelet-activating factor and collagen. The sequence is that of Disintegrin halysin from Gloydius blomhoffii (Mamushi).